The following is a 264-amino-acid chain: Small ribosomal subunit protein eS1A (264 aa).

Residues 233-264 (GEGGGTGKPAGDETGAKVERADGYEPPVQESV) are disordered. Positions 242-255 (AGDETGAKVERADG) are enriched in basic and acidic residues.

This sequence belongs to the eukaryotic ribosomal protein eS1 family. Component of the small ribosomal subunit. Mature ribosomes consist of a small (40S) and a large (60S) subunit. The 40S subunit contains about 33 different proteins and 1 molecule of RNA (18S). The 60S subunit contains about 49 different proteins and 3 molecules of RNA (28S, 5.8S and 5S). Part of the small subunit (SSU) processome, composed of more than 70 proteins and the RNA chaperone small nucleolar RNA (snoRNA) U3.

Its subcellular location is the cytoplasm. The protein resides in the nucleus. The protein localises to the nucleolus. In terms of biological role, component of the small ribosomal subunit. The ribosome is a large ribonucleoprotein complex responsible for the synthesis of proteins in the cell. Part of the small subunit (SSU) processome, first precursor of the small eukaryotic ribosomal subunit. During the assembly of the SSU processome in the nucleolus, many ribosome biogenesis factors, an RNA chaperone and ribosomal proteins associate with the nascent pre-rRNA and work in concert to generate RNA folding, modifications, rearrangements and cleavage as well as targeted degradation of pre-ribosomal RNA by the RNA exosome. May play a role during erythropoiesis. In Xenopus laevis (African clawed frog), this protein is Small ribosomal subunit protein eS1A (rps3a-a).